The chain runs to 221 residues: GTP-binding nuclear protein Ran/TC4 (221 aa).

The region spanning 10 to 174 (DYPSFKLVIV…LYLARKLAGD (165 aa)) is the Small GTPase Ran-type domain. 21–28 (DGGTGKTT) lines the GTP pocket. A switch-I region spans residues 40 to 48 (KKYEPTIGV). GTP is bound by residues glycine 71, 125–128 (NKVD), and 153–155 (SAK). The segment at 71–87 (GQEKFGGLRDGYYIHGQ) is switch-II.

Belongs to the small GTPase superfamily. Ran family. In terms of assembly, found in a nuclear export complex with RanGTP, exportin and pre-miRNA.

The protein localises to the nucleus. GTP-binding protein involved in nucleocytoplasmic transport. Required for the import of protein into the nucleus and also for RNA export. Involved in chromatin condensation and control of cell cycle. The chain is GTP-binding nuclear protein Ran/TC4 from Vicia faba (Broad bean).